Consider the following 382-residue polypeptide: Tuliposide A-converting enzyme 2, chloroplastic (382 aa).

The transit peptide at 1–74 (MSVASFFSSL…PSPSLSPTPT (74 aa)) directs the protein to the chloroplast. S232 (acyl-ester intermediate) is an active-site residue. Residues D324 and H356 each act as charge relay system in the active site.

Belongs to the AB hydrolase superfamily. Homodimer. As to expression, expressed in roots, stems, leaves, petals, stamens and pistils, but not in bulb scales.

The protein localises to the plastid. It localises to the chloroplast. The enzyme catalyses 6-tuliposide A = tulipalin A + D-glucose. With respect to regulation, inhibited by NaF, AgNO(3), HgCl(2), CuSO(4) and phenylmethylsulfonyl fluoride (PMSF). Its function is as follows. Lactone-forming carboxylesterases, specifically catalyzing intramolecular transesterification, but not hydrolysis. Involved in the biosynthesis of tulipalins, defensive chemicals that show antimicrobial activities against a broad range of strains of bacteria and fungi. Substrates are 6-tuliposide A &gt; 6-tuliposide B. The protein is Tuliposide A-converting enzyme 2, chloroplastic (TCEA2) of Tulipa gesneriana (Garden tulip).